A 262-amino-acid polypeptide reads, in one-letter code: Small ribosomal subunit protein uS2 (262 aa).

Belongs to the universal ribosomal protein uS2 family.

This chain is Small ribosomal subunit protein uS2, found in Azobacteroides pseudotrichonymphae genomovar. CFP2.